The chain runs to 414 residues: Multifunctional CCA protein (414 aa).

ATP-binding residues include glycine 8 and arginine 11. CTP is bound by residues glycine 8 and arginine 11. The Mg(2+) site is built by glutamate 21 and aspartate 23. Residues arginine 91, arginine 137, and arginine 140 each coordinate ATP. Arginine 91, arginine 137, and arginine 140 together coordinate CTP. Residues 228 to 329 (TGIHTMMTVA…LKLFDAIDVW (102 aa)) form the HD domain.

Belongs to the tRNA nucleotidyltransferase/poly(A) polymerase family. Bacterial CCA-adding enzyme type 1 subfamily. As to quaternary structure, monomer. Can also form homodimers and oligomers. Requires Mg(2+) as cofactor. Ni(2+) is required as a cofactor.

The enzyme catalyses a tRNA precursor + 2 CTP + ATP = a tRNA with a 3' CCA end + 3 diphosphate. The catalysed reaction is a tRNA with a 3' CCA end + 2 CTP + ATP = a tRNA with a 3' CCACCA end + 3 diphosphate. In terms of biological role, catalyzes the addition and repair of the essential 3'-terminal CCA sequence in tRNAs without using a nucleic acid template. Adds these three nucleotides in the order of C, C, and A to the tRNA nucleotide-73, using CTP and ATP as substrates and producing inorganic pyrophosphate. tRNA 3'-terminal CCA addition is required both for tRNA processing and repair. Also involved in tRNA surveillance by mediating tandem CCA addition to generate a CCACCA at the 3' terminus of unstable tRNAs. While stable tRNAs receive only 3'-terminal CCA, unstable tRNAs are marked with CCACCA and rapidly degraded. The sequence is that of Multifunctional CCA protein from Pectobacterium carotovorum subsp. carotovorum (strain PC1).